Here is a 65-residue protein sequence, read N- to C-terminus: UPF0291 protein BBR47_33060 (65 aa).

The protein belongs to the UPF0291 family.

It localises to the cytoplasm. This Brevibacillus brevis (strain 47 / JCM 6285 / NBRC 100599) protein is UPF0291 protein BBR47_33060.